The sequence spans 117 residues: Small ribosomal subunit protein uS19c (117 aa).

This sequence belongs to the universal ribosomal protein uS19 family.

The protein localises to the plastid. Functionally, protein S19 forms a complex with S13 that binds strongly to the 16S ribosomal RNA. This is Small ribosomal subunit protein uS19c (rps19) from Helicosporidium sp. subsp. Simulium jonesii (Green alga).